The chain runs to 289 residues: Bifunctional protein FolD (289 aa).

NADP(+) contacts are provided by residues Gly166 to Ser168, Ser191, and Ile232.

This sequence belongs to the tetrahydrofolate dehydrogenase/cyclohydrolase family. In terms of assembly, homodimer.

The enzyme catalyses (6R)-5,10-methylene-5,6,7,8-tetrahydrofolate + NADP(+) = (6R)-5,10-methenyltetrahydrofolate + NADPH. The catalysed reaction is (6R)-5,10-methenyltetrahydrofolate + H2O = (6R)-10-formyltetrahydrofolate + H(+). It functions in the pathway one-carbon metabolism; tetrahydrofolate interconversion. Functionally, catalyzes the oxidation of 5,10-methylenetetrahydrofolate to 5,10-methenyltetrahydrofolate and then the hydrolysis of 5,10-methenyltetrahydrofolate to 10-formyltetrahydrofolate. The polypeptide is Bifunctional protein FolD (Synechococcus elongatus (strain ATCC 33912 / PCC 7942 / FACHB-805) (Anacystis nidulans R2)).